Here is a 398-residue protein sequence, read N- to C-terminus: S-adenosylmethionine synthase (398 aa).

His-16 contacts ATP. Asp-18 lines the Mg(2+) pocket. K(+) is bound at residue Glu-51. 2 residues coordinate L-methionine: Glu-64 and Gln-108. Positions 108–118 (QSADIAQGVDA) are flexible loop. ATP-binding positions include 176 to 178 (DSK), 242 to 243 (KF), Asp-251, 257 to 258 (RK), Ala-274, and Lys-278. Asp-251 contacts L-methionine. Lys-282 is a binding site for L-methionine.

Belongs to the AdoMet synthase family. In terms of assembly, homotetramer; dimer of dimers. It depends on Mg(2+) as a cofactor. Requires K(+) as cofactor.

The protein resides in the cytoplasm. The enzyme catalyses L-methionine + ATP + H2O = S-adenosyl-L-methionine + phosphate + diphosphate. The protein operates within amino-acid biosynthesis; S-adenosyl-L-methionine biosynthesis; S-adenosyl-L-methionine from L-methionine: step 1/1. In terms of biological role, catalyzes the formation of S-adenosylmethionine (AdoMet) from methionine and ATP. The overall synthetic reaction is composed of two sequential steps, AdoMet formation and the subsequent tripolyphosphate hydrolysis which occurs prior to release of AdoMet from the enzyme. This chain is S-adenosylmethionine synthase, found in Nitrobacter hamburgensis (strain DSM 10229 / NCIMB 13809 / X14).